The following is a 583-amino-acid chain: uncharacterized protein (583 aa).

The region spanning Y162–K424 is the FAD-binding FR-type domain.

This sequence belongs to the flavoprotein pyridine nucleotide cytochrome reductase family. FAD is required as a cofactor.

The protein resides in the mitochondrion. This is an uncharacterized protein from Schizosaccharomyces pombe (strain 972 / ATCC 24843) (Fission yeast).